A 200-amino-acid polypeptide reads, in one-letter code: Large ribosomal subunit protein uL4 (200 aa).

The interval glycine 38–arginine 68 is disordered. Basic residues predominate over residues glycine 54–glycine 65.

Belongs to the universal ribosomal protein uL4 family. Part of the 50S ribosomal subunit.

In terms of biological role, one of the primary rRNA binding proteins, this protein initially binds near the 5'-end of the 23S rRNA. It is important during the early stages of 50S assembly. It makes multiple contacts with different domains of the 23S rRNA in the assembled 50S subunit and ribosome. Its function is as follows. Forms part of the polypeptide exit tunnel. The protein is Large ribosomal subunit protein uL4 of Pseudomonas savastanoi pv. phaseolicola (strain 1448A / Race 6) (Pseudomonas syringae pv. phaseolicola (strain 1448A / Race 6)).